Consider the following 20-residue polypeptide: Small ribosomal subunit protein bS20 (20 aa).

The protein belongs to the bacterial ribosomal protein bS20 family.

In terms of biological role, binds directly to 16S ribosomal RNA. This is Small ribosomal subunit protein bS20 (rpsT) from Brevundimonas diminuta (Pseudomonas diminuta).